A 413-amino-acid chain; its full sequence is MAAATNRFRALYSSSRVATPQAGSASYLSYRGYATTDPSSATGGASTAGKRRTTFTDKLNAGPSFGDFVSGGRDNAPLDPSEAYALKTALVGPAGRKKEMTRLPSWLKTPIPDSKNYQRLKKDLRGLNLHTVCEEARCPNISDCWGGGDKAAATATIMLMGDTCTRGCRFCSVKTSRAPPPLDPHEPENTAEAISRWGLGYVVLTSVDRDDLADGGARHFAETVIKIKQKAPNILVECLTGDYAGDLEMVGVVARSGLDVYAHNVETVEALTPHVRDRRATFQQSLRVLEAAKKAKPSLITKTSLMLGLGETEEQLWDALRQLRAVNVDVVTFGQYMRPTKRHMAVHEYVTPDRFELWRQRALDMGFLYCASGPLVRSSYKAGEAFIENVLKKRRSGAPEVSHNTVPVDEATR.

The transit peptide at 1 to 33 (MAAATNRFRALYSSSRVATPQAGSASYLSYRGY) directs the protein to the mitochondrion. Residues Cys-133, Cys-138, Cys-144, Cys-164, Cys-168, Cys-171, and Ser-379 each contribute to the [4Fe-4S] cluster site. Residues 147–368 (GGDKAAATAT…RQRALDMGFL (222 aa)) enclose the Radical SAM core domain.

It belongs to the radical SAM superfamily. Lipoyl synthase family. [4Fe-4S] cluster serves as cofactor.

Its subcellular location is the mitochondrion. It catalyses the reaction [[Fe-S] cluster scaffold protein carrying a second [4Fe-4S](2+) cluster] + N(6)-octanoyl-L-lysyl-[protein] + 2 oxidized [2Fe-2S]-[ferredoxin] + 2 S-adenosyl-L-methionine + 4 H(+) = [[Fe-S] cluster scaffold protein] + N(6)-[(R)-dihydrolipoyl]-L-lysyl-[protein] + 4 Fe(3+) + 2 hydrogen sulfide + 2 5'-deoxyadenosine + 2 L-methionine + 2 reduced [2Fe-2S]-[ferredoxin]. It functions in the pathway protein modification; protein lipoylation via endogenous pathway; protein N(6)-(lipoyl)lysine from octanoyl-[acyl-carrier-protein]: step 2/2. Catalyzes the radical-mediated insertion of two sulfur atoms into the C-6 and C-8 positions of the octanoyl moiety bound to the lipoyl domains of lipoate-dependent enzymes, thereby converting the octanoylated domains into lipoylated derivatives. In Emericella nidulans (strain FGSC A4 / ATCC 38163 / CBS 112.46 / NRRL 194 / M139) (Aspergillus nidulans), this protein is Lipoyl synthase, mitochondrial.